Here is a 630-residue protein sequence, read N- to C-terminus: PAN2-PAN3 deadenylation complex subunit PAN3 (630 aa).

A C3H1-type zinc finger spans residues 7 to 36 (SAKDTLCKNILIYGYCKFENKGCAFSHHKP). 2 disordered regions span residues 38 to 72 (VGQPPVSASSSSGYSGNSSPAEAKRKFNLNTPSFQ) and 135 to 171 (GFGSEYPSSPNTSGAGQPPNPYLTGNGHPASMAQSSG). A compositionally biased stretch (low complexity) spans 44-56 (SASSSSGYSGNSS). Positions 140 to 149 (YPSSPNTSGA) are enriched in polar residues. The interval 231–501 (QTLPRSNLPE…LDRFSQRYLT (271 aa)) is pseudokinase domain. Residues R283, 333-340 (DYFPNSST), and 388-389 (TK) each bind ATP. Positions 502 to 540 (TRLFSTINNLEDSTDFMESQITTELENARLFRLLTKLNF) form a coiled coil. Residues 541–630 (IIDRPEAKDW…DSVFRNLTRD (90 aa)) form a knob domain region.

It belongs to the protein kinase superfamily. PAN3 family. In terms of assembly, homodimer. Forms a heterotrimer with a catalytic subunit PAN2 to form the poly(A)-nuclease (PAN) deadenylation complex. Interacts (via PAM-2 motif) with poly(A)-binding protein PAB1 (via PABC domain), conferring substrate specificity of the enzyme complex.

It is found in the cytoplasm. In terms of biological role, regulatory subunit of the poly(A)-nuclease (PAN) deadenylation complex, one of two cytoplasmic mRNA deadenylases involved in mRNA turnover. PAN specifically shortens poly(A) tails of RNA and the activity is stimulated by poly(A)-binding protein PAB1. PAN deadenylation is followed by rapid degradation of the shortened mRNA tails by the CCR4-NOT complex. Deadenylated mRNAs are then degraded by two alternative mechanisms, namely exosome-mediated 3'-5' exonucleolytic degradation, or deadenylation-dependent mRNA decaping and subsequent 5'-3' exonucleolytic degradation by XRN1. May also be involved in post-transcriptional maturation of mRNA poly(A) tails. PAN3 acts as a positive regulator for PAN activity, recruiting the catalytic subunit PAN2 to mRNA via its interaction with RNA and with PAB1. The protein is PAN2-PAN3 deadenylation complex subunit PAN3 of Scheffersomyces stipitis (strain ATCC 58785 / CBS 6054 / NBRC 10063 / NRRL Y-11545) (Yeast).